Reading from the N-terminus, the 447-residue chain is Na(+)-translocating NADH-quinone reductase subunit A (447 aa).

It belongs to the NqrA family. Composed of six subunits; NqrA, NqrB, NqrC, NqrD, NqrE and NqrF.

It carries out the reaction a ubiquinone + n Na(+)(in) + NADH + H(+) = a ubiquinol + n Na(+)(out) + NAD(+). In terms of biological role, NQR complex catalyzes the reduction of ubiquinone-1 to ubiquinol by two successive reactions, coupled with the transport of Na(+) ions from the cytoplasm to the periplasm. NqrA to NqrE are probably involved in the second step, the conversion of ubisemiquinone to ubiquinol. In Haemophilus influenzae (strain PittEE), this protein is Na(+)-translocating NADH-quinone reductase subunit A.